The following is a 347-amino-acid chain: Terpene synthase 2 (347 aa).

Residues D103, N247, S251, and E255 each contribute to the Mg(2+) site. Residues 103–107 (DDLLE) carry the D(D/E)XX(D/E) motif motif. Residues 247-255 (NDIFSLKKE) carry the NSE motif motif. Positions 329-336 (WCSKSTRY) match the WxxxxxRY motif motif.

This sequence belongs to the terpene synthase family. Mg(2+) serves as cofactor.

Functionally, terpene synthase that may be involved in the production of volatile terpenoids. Does not show detectable terpene products with either farnesyl diphosphate (FPP) or geranyl diphosphate (GPP). P.polycephalum has a unique biology and these volatile terpenoids could function in internal communication of P.polycephalum, to mark the territory that have been explored, or they may be involved in chemotaxis. In Physarum polycephalum (Slime mold), this protein is Terpene synthase 2.